We begin with the raw amino-acid sequence, 201 residues long: MAGPQRRGSGAGGGERRDRKGRDGGASAAEKTAYVERVVAINRVAKVVKGGRRFSFTALVVVGDGDGTVGVGYGKAKEVPAAIAKGVEEAKKNFFKVPRIQGTIPHPITGEKAAGVVLLKPASPGTGVIAGGPVRAVLECAGVHDILSKSLGSSNAINIVHATVAALQGLQRPEEIAARRGLPLEDVAPAALLRARAGAGA.

The tract at residues 1–28 (MAGPQRRGSGAGGGERRDRKGRDGGASA) is disordered. The segment covering 14-23 (GERRDRKGRD) has biased composition (basic and acidic residues). Residues 34–97 (YVERVVAINR…EEAKKNFFKV (64 aa)) enclose the S5 DRBM domain.

Belongs to the universal ribosomal protein uS5 family. In terms of assembly, part of the 30S ribosomal subunit. Contacts proteins S4 and S8.

In terms of biological role, with S4 and S12 plays an important role in translational accuracy. Located at the back of the 30S subunit body where it stabilizes the conformation of the head with respect to the body. The sequence is that of Small ribosomal subunit protein uS5 from Streptomyces griseus subsp. griseus (strain JCM 4626 / CBS 651.72 / NBRC 13350 / KCC S-0626 / ISP 5235).